The sequence spans 300 residues: Centromere protein O (300 aa).

Coiled coils occupy residues 18–42 and 83–109; these read LAHL…QSVQ and NQTV…QAYH. Ser35 carries the post-translational modification Phosphoserine.

Belongs to the CENP-O/MCM21 family. Component of the CENPA-CAD complex, composed of CENPI, CENPK, CENPL, CENPO, CENPP, CENPQ, CENPR and CENPS. The CENPA-CAD complex interacts with the CENPA-NAC complex, at least composed of CENPA, CENPC, CENPH, CENPM, CENPN, CENPT and CENPU.

It is found in the nucleus. It localises to the chromosome. The protein localises to the centromere. The protein resides in the kinetochore. In terms of biological role, component of the CENPA-CAD (nucleosome distal) complex, a complex recruited to centromeres which is involved in assembly of kinetochore proteins, mitotic progression and chromosome segregation. May be involved in incorporation of newly synthesized CENPA into centromeres via its interaction with the CENPA-NAC complex. Modulates the kinetochore-bound levels of NDC80 complex. This chain is Centromere protein O (CENPO), found in Homo sapiens (Human).